The following is a 239-amino-acid chain: Lysophospholipase-like protein 1 (239 aa).

An N-acetylalanine modification is found at A2. Residues S125, D180, and H212 each act as charge relay system in the active site.

It belongs to the AB hydrolase superfamily. AB hydrolase 2 family.

The protein localises to the cytoplasm. It is found in the cytosol. It catalyses the reaction S-hexadecanoyl-L-cysteinyl-[protein] + H2O = L-cysteinyl-[protein] + hexadecanoate + H(+). Functionally, palmitoyl thioesterase that catalyzes depalmitoylation of CGAS and KCNMA1. Acts as a regulator of innate immunity by mediating depalmitoylation of CGAS, thereby preventing CGAS homodimerization and cyclic GMP-AMP synthase activity. Does not exhibit phospholipase nor triacylglycerol lipase activity, able to hydrolyze only short chain substrates due to its shallow active site. This Mus musculus (Mouse) protein is Lysophospholipase-like protein 1.